The following is a 760-amino-acid chain: Probable myosin-binding protein 4 (760 aa).

Residues 26–46 traverse the membrane as a helical segment; sequence WFLILLMFIDALLSYLLVWFA. 4 disordered regions span residues 161 to 189, 247 to 273, 292 to 311, and 348 to 595; these read SRGR…SLKK, SEKR…QPVL, SMLG…VKAK, and EAEV…KHSA. Over residues 352-366 the composition is skewed to low complexity; that stretch reads SGSSSPSGGEFLSPS. The segment covering 371 to 383 has biased composition (basic and acidic residues); sequence ASREIRIQEHDDS. The span at 385-394 shows a compositional bias: polar residues; it reads DFSQNITSSA. Positions 388 to 416 form a coiled coil; it reads QNITSSAMEIEEFEAAIEQKESDHMDVSG. Over residues 404–413 the composition is skewed to basic and acidic residues; sequence IEQKESDHMD. Acidic residues-rich tracts occupy residues 446-458 and 517-526; these read LEQE…ESEV and EEDVDNEESE. Composition is skewed to basic and acidic residues over residues 537-550 and 562-580; these read VKEE…HGDH and SKEE…KITE. Positions 611 to 709 constitute a GTD-binding domain; the sequence is SLVEVLKQQL…DLEMELEYYR (99 aa). The segment at 725-760 is disordered; it reads GILGNTEETNVTSPTDETSIKDSTDTKLTGSPSAEN. Polar residues-rich tracts occupy residues 730–741 and 750–760; these read TEETNVTSPTDE and TKLTGSPSAEN.

The protein localises to the endomembrane system. Its function is as follows. Membrane-anchored myosin receptors that define a distinct, plant-specific transport vesicle compartment. This chain is Probable myosin-binding protein 4, found in Arabidopsis thaliana (Mouse-ear cress).